Reading from the N-terminus, the 307-residue chain is Nucleotide-binding protein Sca_0414 (307 aa).

19–26 is a binding site for ATP; that stretch reads GMSGAGKS. A GTP-binding site is contributed by 70 to 73; the sequence is DLRG.

Belongs to the RapZ-like family.

Its function is as follows. Displays ATPase and GTPase activities. The polypeptide is Nucleotide-binding protein Sca_0414 (Staphylococcus carnosus (strain TM300)).